The following is a 422-amino-acid chain: Keratin, type I cytoskeletal 23 (422 aa).

A compositionally biased stretch (polar residues) spans 1-13 (MNSGHSFSQTPSA). Residues 1-71 (MNSGHSFSQT…GRSSPLLGGN (71 aa)) form a head region. A disordered region spans residues 1–73 (MNSGHSFSQT…SSPLLGGNGK (73 aa)). Residues 72-107 (GKATMQNLNDRLASYLEKVRALEEANMKLESRILKW) form a coil 1A region. An IF rod domain is found at 72–382 (GKATMQNLND…RLLEGESEGT (311 aa)). Residues 108–125 (HQQRDPGSKKDYSQYEEN) are linker 1. A coil 1B region spans residues 126 to 217 (ITHLQEQIVD…KHHEQEMEKH (92 aa)). A linker 12 region spans residues 218-240 (HVPSDFNVNVKVDTGPREDLIKV). Positions 241–378 (LEDMRQEYEL…TTYRRLLEGE (138 aa)) are coil 2. The rod-like helical tail stretch occupies residues 379–422 (SEGTREESKSSMKVSATPKIKAITQETINGRLVLCQVNEIQKHA).

It belongs to the intermediate filament family. In terms of assembly, heterotetramer of two type I and two type II keratins.

This chain is Keratin, type I cytoskeletal 23 (KRT23), found in Homo sapiens (Human).